Reading from the N-terminus, the 396-residue chain is Subtelomeric hrmA-associated cluster protein AFUB_079040 (396 aa).

Disordered regions lie at residues 1 to 32 and 347 to 396; these read MANKKKPSIKKSVNEPNPHLKQSHASGSQQSL and YPEN…ECGR. Residues 23 to 32 show a composition bias toward polar residues; sequence SHASGSQQSL. Residues 367-380 are compositionally biased toward basic residues; the sequence is SKKKKDKKKKKSNK.

Functionally, part of the subtelomeric hrmA-associated cluster (HAC) containing genes that alter the hyphal surface (such as reduced total chitin or increased beta-glucan exposure) and perturb inter-hyphal interactions within the developing biofilms, resulting in a loss of vertically aligned polarized growing filaments. Consequently, this hypoxia-typic morphotype (called H-MORPH) with altered biofilm architecture leads to increased hypoxia fitness, increased host inflammation, rapid disease progression, and mortality in a murine model of invasive aspergillosis. The polypeptide is Subtelomeric hrmA-associated cluster protein AFUB_079040 (Aspergillus fumigatus (strain CBS 144.89 / FGSC A1163 / CEA10) (Neosartorya fumigata)).